The chain runs to 442 residues: Threonine/serine transporter TdcC (442 aa).

11 consecutive transmembrane segments (helical) span residues 21–41 (TTWT…FFPI), 44–64 (GFGG…IAFL), 96–116 (GVVI…IYGV), 139–159 (VVAL…KDLM), 162–182 (VMSF…LSLI), 206–226 (ILVT…FSPI), 258–278 (ASIL…FTLS), 312–332 (ITLE…SFFG), 364–384 (LISM…NPNI), 388–408 (IEAM…MYAI), and 422–442 (ENYF…YKLL).

The protein belongs to the amino acid/polyamine transporter 2 family. SdaC/TdcC subfamily.

It localises to the cell inner membrane. It catalyses the reaction L-threonine(in) + H(+)(in) = L-threonine(out) + H(+)(out). It carries out the reaction L-serine(in) + H(+)(in) = L-serine(out) + H(+)(out). Its function is as follows. Involved in the import of threonine and serine into the cell, with the concomitant import of a proton (symport system). In Yersinia enterocolitica serotype O:8 / biotype 1B (strain NCTC 13174 / 8081), this protein is Threonine/serine transporter TdcC.